We begin with the raw amino-acid sequence, 198 residues long: NAD(P)H quinone oxidoreductase PST1 (198 aa).

Positions 6–192 (VAIIIYSLYH…AIAKQQGEDF (187 aa)) constitute a Flavodoxin-like domain. FMN contacts are provided by residues 12–16 (SLYHH) and 112–164 (VFVW…SPWG).

Belongs to the WrbA family. FMN is required as a cofactor.

Its subcellular location is the cell membrane. The catalysed reaction is a quinone + NADH + H(+) = a quinol + NAD(+). It carries out the reaction a quinone + NADPH + H(+) = a quinol + NADP(+). Functionally, flavodoxin-like protein (FLP) that plays a role in cell wall integrity, oxidative stress protection and virulence. FLPs act as NAD(P)H quinone oxidoreductases. Reduces ubiquinone (coenzyme Q), enabling it to serve as an antioxidant in the membrane. The chain is NAD(P)H quinone oxidoreductase PST1 from Candida albicans (strain SC5314 / ATCC MYA-2876) (Yeast).